Here is a 244-residue protein sequence, read N- to C-terminus: MAAAAAAPASSEKEVLPPSLTSSSEPPPLFDGTTRLYVAYHCPYAQRAWIARNYKGLQDKIKIVAIDLADRPAWYKEKVYPENKVPSLEHNNQVKGESLDLVKYIDTNFEGPALLPDDSEKQQFAEELLAYTDAFNKASYSSIVAKGDVCDEAVAALDKIEAALSKFNDGPFFLGQFSLVDIAYVPFIERFQIFFSGIKNYDITKGRPNLQKFIEEVNKIHAYTETKQDPQFLLEHTKKRLGIA.

Residues 1–27 are disordered; the sequence is MAAAAAAPASSEKEVLPPSLTSSSEPP. The region spanning 32-113 is the GST N-terminal domain; sequence GTTRLYVAYH…YIDTNFEGPA (82 aa). Glutathione-binding positions include V85 and 97 to 98; that span reads ES. The GST C-terminal domain maps to 118-241; the sequence is DSEKQQFAEE…FLLEHTKKRL (124 aa).

The sequence is that of Protein IN2-1 homolog B (GSTZ5) from Oryza sativa subsp. indica (Rice).